Here is an 86-residue protein sequence, read N- to C-terminus: Cell division topological specificity factor (86 aa).

Belongs to the MinE family.

Functionally, prevents the cell division inhibition by proteins MinC and MinD at internal division sites while permitting inhibition at polar sites. This ensures cell division at the proper site by restricting the formation of a division septum at the midpoint of the long axis of the cell. The polypeptide is Cell division topological specificity factor (Photobacterium profundum (strain SS9)).